Reading from the N-terminus, the 666-residue chain is LEAF RUST 10 DISEASE-RESISTANCE LOCUS RECEPTOR-LIKE PROTEIN KINASE-like 2.5 (666 aa).

The first 30 residues, 1 to 30, serve as a signal peptide directing secretion; it reads MINFSLSLTKSMSYSFIWMLFVIHISCVLS. Topologically, residues 31-275 are extracellular; the sequence is ADGNHILCSP…PTRNKVILKL (245 aa). N119, N141, N171, and N198 each carry an N-linked (GlcNAc...) asparagine glycan. The chain crosses the membrane as a helical span at residues 276–296; sequence FFIVIYVLGIGAASFAMMGVI. The Cytoplasmic segment spans residues 297–666; sequence LVVTCLNCLI…YTEICSINVA (370 aa). In terms of domain architecture, Protein kinase spans 348–636; sequence KSFAEVIGKG…ALEVPPRPVL (289 aa). ATP-binding positions include 354–362 and K376; that span reads IGKGGFGTV. A Phosphotyrosine modification is found at Y420. D471 functions as the Proton acceptor in the catalytic mechanism. Residues T508 and T511 each carry the phosphothreonine modification.

The protein belongs to the protein kinase superfamily. Ser/Thr protein kinase family.

It localises to the membrane. It catalyses the reaction L-seryl-[protein] + ATP = O-phospho-L-seryl-[protein] + ADP + H(+). It carries out the reaction L-threonyl-[protein] + ATP = O-phospho-L-threonyl-[protein] + ADP + H(+). In Arabidopsis thaliana (Mouse-ear cress), this protein is LEAF RUST 10 DISEASE-RESISTANCE LOCUS RECEPTOR-LIKE PROTEIN KINASE-like 2.5.